A 543-amino-acid polypeptide reads, in one-letter code: Peptide chain release factor 3 (543 aa).

One can recognise a tr-type G domain in the interval 21 to 289 (KKRRTFAIIS…ALSDWAPSPL (269 aa)). GTP-binding positions include 30–37 (SHPDAGKT), 98–102 (DTPGH), and 152–155 (NKLD).

The protein belongs to the TRAFAC class translation factor GTPase superfamily. Classic translation factor GTPase family. PrfC subfamily.

It is found in the cytoplasm. Increases the formation of ribosomal termination complexes and stimulates activities of RF-1 and RF-2. It binds guanine nucleotides and has strong preference for UGA stop codons. It may interact directly with the ribosome. The stimulation of RF-1 and RF-2 is significantly reduced by GTP and GDP, but not by GMP. This is Peptide chain release factor 3 from Thiobacillus denitrificans (strain ATCC 25259 / T1).